The chain runs to 442 residues: Phosphatidylserine synthase 2 (442 aa).

Over Met1 to Arg40 the chain is Cytoplasmic. Residues Ala41–Glu61 form a helical membrane-spanning segment. At Glu62–Gly74 the chain is on the lumenal side. The helical transmembrane segment at Ile75–Phe95 threads the bilayer. Residues Ser96 to Arg104 are Cytoplasmic-facing. Residues Phe105–Val125 traverse the membrane as a helical segment. The Lumenal portion of the chain corresponds to Gln126–Arg291. Residues Asn159 and Asn215 are each glycosylated (N-linked (GlcNAc...) asparagine). Residues Trp292 to Leu312 traverse the membrane as a helical segment. A topological domain (cytoplasmic) is located at residue Lys313. A helical transmembrane segment spans residues Phe314 to Asn334. Residues Val335–Lys354 are Lumenal-facing. A helical transmembrane segment spans residues Lys355–Val375. At Lys376 to Thr381 the chain is on the cytoplasmic side. A helical membrane pass occupies residues Leu382–Leu402. Residues Thr403–His442 lie on the Lumenal side of the membrane.

Belongs to the phosphatidyl serine synthase family.

It localises to the endoplasmic reticulum membrane. The enzyme catalyses a 1,2-diacyl-sn-glycero-3-phosphoethanolamine + L-serine = a 1,2-diacyl-sn-glycero-3-phospho-L-serine + ethanolamine. The catalysed reaction is 1-hexadecanoyl-2-(9Z-octadecenoyl)-sn-glycero-3-phosphoethanolamine + L-serine = 1-hexadecanoyl-2-(9Z-octadecenoyl)-sn-glycero-3-phospho-L-serine + ethanolamine. It carries out the reaction 1-hexadecanoyl-2-(4Z,7Z,10Z,13Z,16Z,19Z-docosahexaenoyl)-sn-glycero-3-phosphoethanolamine + L-serine = 1-hexadecanoyl-2-(4Z,7Z,10Z,13Z,16Z,19Z-docosahexaenoyl)-sn-glycero-3-phosphoserine + ethanolamine. It catalyses the reaction 1-octadecanoyl-2-(5Z,8Z,11Z,14Z)-eicosatetraenoyl-sn-glycero-3-phosphoethanolamine + L-serine = 1-octadecanoyl-2-(5Z,8Z,11Z,14Z)-eicosatetraenoyl-sn-glycero-3-phosphoserine + ethanolamine. The enzyme catalyses 1-octadecanoyl-2-(4Z,7Z,10Z,13Z,16Z,19Z-docosahexaenoyl)-sn-glycero-3-phosphoethanolamine + L-serine = 1-octadecanoyl-2-(4Z,7Z,10Z,13Z,16Z,19Z-docosahexaenoyl)-sn-glycero-3-phosphoserine + ethanolamine. The catalysed reaction is 1-(1Z-octadecenyl)-2-(4Z,7Z,10Z,13Z,16Z,19Z-docosahexaenoyl)-sn-glycero-3-phosphoethanolamine + L-serine = 1-(1Z-octadecenyl)-2-(4Z,7Z,10Z,13Z,16Z,19Z-docosahexaenoyl)-sn-glycero-3-phospho-L-serine + ethanolamine. It carries out the reaction 1-octadecanoyl-2-(9Z-octadecenoyl)-sn-glycero-3-phosphoethanolamine + L-serine = 1-octadecanoyl-2-(9Z-octadecenoyl)-sn-glycero-3-phospho-L-serine + ethanolamine. It catalyses the reaction 1-(1Z-octadecenyl)-2-(9Z-octadecenoyl)-sn-glycero-3-phosphoethanolamine + L-serine = 1-(1Z-octadecenyl)-2-(9Z-octadecenoyl)-sn-glycero-3-phospho-L-serine + ethanolamine. The enzyme catalyses 1-(1Z-octadecenyl)-2-(5Z,8Z,11Z,14Z- eicosatetraenoyl)-sn-glycero-3-phosphoethanolamine + L-serine = 1-(1Z-octadecenyl)-2-(5Z,8Z,11Z,14Z-eicosatetraenoyl)-sn-glycero-3-phospho-L-serine + ethanolamine. Its pathway is phospholipid metabolism; phosphatidylserine biosynthesis. Its function is as follows. Catalyzes a base-exchange reaction in which the polar head group of phosphatidylethanolamine (PE) or phosphatidylcholine (PC) is replaced by L-serine. Catalyzes the conversion of phosphatatidylethanolamine and does not act on phosphatidylcholine. Can utilize both phosphatidylethanolamine (PE) plasmalogen and diacyl PE as substrate and the latter is six times better utilized, indicating the importance of an ester linkage at the sn-1 position. Although it shows no sn-1 fatty acyl preference, exhibits significant preference towards docosahexaenoic acid (22:6n-3) compared with 18:1 or 20:4 at the sn-2 position. In Gallus gallus (Chicken), this protein is Phosphatidylserine synthase 2 (PTDSS1).